Reading from the N-terminus, the 77-residue chain is Metallothionein-like protein type 2 (77 aa).

The protein belongs to the metallothionein superfamily. Type 15 family. Expressed in the left, stem and flower, at very low levels in roots and is not detectable in mesophyll protoplasts.

Metallothioneins have a high content of cysteine residues that bind various heavy metals. The protein is Metallothionein-like protein type 2 (MTI) of Vicia faba (Broad bean).